A 321-amino-acid polypeptide reads, in one-letter code: Reticulon-2 (321 aa).

Disordered stretches follow at residues 1 to 36 (MGHV…SPVT) and 65 to 85 (PPVR…PREE). The 188-residue stretch at 134-321 (VKDLLYWRDI…TVKKPPAKQK (188 aa)) folds into the Reticulon domain. 2 helical membrane passes run 163–183 (FSVI…TLTL) and 250–270 (FLVI…ITVL).

Its subcellular location is the endoplasmic reticulum membrane. It localises to the sarcoplasmic reticulum membrane. The protein localises to the cell membrane. The protein resides in the sarcolemma. It is found in the T-tubule. Its subcellular location is the cytoplasm. It localises to the myofibril. The protein localises to the sarcomere. The protein resides in the z line. It is found in the cytoskeleton. Its function is as follows. Inhibits amyloid precursor protein processing, probably by blocking BACE1 activity. Enhances trafficking of the glutamate transporter SLC1A1/EAAC1 from the endoplasmic reticulum to the cell surface. Plays a role in the translocation of SLC2A4/GLUT4 from intracellular membranes to the cell membrane which facilitates the uptake of glucose into the cell. This chain is Reticulon-2, found in Xenopus tropicalis (Western clawed frog).